A 104-amino-acid polypeptide reads, in one-letter code: Large ribosomal subunit protein bL21 (104 aa).

The protein belongs to the bacterial ribosomal protein bL21 family. In terms of assembly, part of the 50S ribosomal subunit. Contacts protein L20.

Functionally, this protein binds to 23S rRNA in the presence of protein L20. The sequence is that of Large ribosomal subunit protein bL21 from Streptococcus gordonii (strain Challis / ATCC 35105 / BCRC 15272 / CH1 / DL1 / V288).